Consider the following 271-residue polypeptide: 4-hydroxy-tetrahydrodipicolinate reductase (271 aa).

NAD(+)-binding positions include 11–16 (GAAGRM), E37, 102–104 (GTT), and 126–129 (AGNM). The active-site Proton donor/acceptor is H159. H160 provides a ligand contact to (S)-2,3,4,5-tetrahydrodipicolinate. K163 functions as the Proton donor in the catalytic mechanism. 169–170 (GT) contributes to the (S)-2,3,4,5-tetrahydrodipicolinate binding site.

The protein belongs to the DapB family.

It localises to the cytoplasm. It carries out the reaction (S)-2,3,4,5-tetrahydrodipicolinate + NAD(+) + H2O = (2S,4S)-4-hydroxy-2,3,4,5-tetrahydrodipicolinate + NADH + H(+). The catalysed reaction is (S)-2,3,4,5-tetrahydrodipicolinate + NADP(+) + H2O = (2S,4S)-4-hydroxy-2,3,4,5-tetrahydrodipicolinate + NADPH + H(+). Its pathway is amino-acid biosynthesis; L-lysine biosynthesis via DAP pathway; (S)-tetrahydrodipicolinate from L-aspartate: step 4/4. Its function is as follows. Catalyzes the conversion of 4-hydroxy-tetrahydrodipicolinate (HTPA) to tetrahydrodipicolinate. The sequence is that of 4-hydroxy-tetrahydrodipicolinate reductase from Parvibaculum lavamentivorans (strain DS-1 / DSM 13023 / NCIMB 13966).